Consider the following 2315-residue polypeptide: Receptor-type tyrosine-protein phosphatase zeta (2315 aa).

The N-terminal stretch at 1 to 24 is a signal peptide; that stretch reads MRILKRFLACIQLLCVCRLDWANG. Residues 25–1636 lie on the Extracellular side of the membrane; sequence YYRQQRKLVE…LAEGLESEKK (1612 aa). One can recognise an Alpha-carbonic anhydrase domain in the interval 36 to 300; it reads IGWSYTGALN…KFSRQVFSSY (265 aa). 2 disulfides stabilise this stretch: cysteine 56–cysteine 240 and cysteine 133–cysteine 264. N-linked (GlcNAc...) asparagine glycans are attached at residues asparagine 105, asparagine 134, asparagine 223, asparagine 232, asparagine 324, and asparagine 381. Residues 314–413 form the Fibronectin type-III domain; that stretch reads EPENVQADPE…LIVDMPTDNP (100 aa). 2 disordered regions span residues 442–462 and 477–507; these read IVNPGRDSATNQIRKKEPQIS and AKTNRSPTRGSEFSGKGDVPNTSLNSTSQPV. Residues 496–507 are compositionally biased toward polar residues; the sequence is PNTSLNSTSQPV. Asparagine 497, asparagine 501, and asparagine 552 each carry an N-linked (GlcNAc...) asparagine glycan. Residue serine 587 is glycosylated (O-linked (Xyl...) (chondroitin sulfate) serine). 2 N-linked (GlcNAc...) asparagine glycosylation sites follow: asparagine 602 and asparagine 629. The interval 628–650 is disordered; the sequence is RNASEDSTSSGSEESLKDPSMEG. At serine 637 the chain carries Phosphoserine; alternate. O-linked (Xyl...) (chondroitin sulfate) serine; alternate glycosylation is present at serine 637. Serine 639 is subject to Phosphoserine. A glycan (N-linked (GlcNAc...) asparagine) is linked at asparagine 677. The O-linked (Xyl...) (chondroitin sulfate) serine glycan is linked to serine 997. Asparagine 1017, asparagine 1050, asparagine 1082, and asparagine 1122 each carry an N-linked (GlcNAc...) asparagine glycan. Polar residues predominate over residues 1123–1138; it reads FSVQPTHTVSQASGDT. Disordered regions lie at residues 1123 to 1160, 1397 to 1523, 1543 to 1572, and 1584 to 1621; these read FSVQPTHTVSQASGDTSLKPVLSANSEPASSDPASSEM, KATS…EEND, LTSDEESGSGQGTSDSLNENETSTDFSFAD, and AGDSEITPGFPQSPTSSVTSENSEVFHVSEAEASNSSH. Low complexity predominate over residues 1145-1159; that stretch reads SANSEPASSDPASSE. A compositionally biased stretch (acidic residues) spans 1417–1432; sequence EDGDTDDDGDDDDDDR. A compositionally biased stretch (basic and acidic residues) spans 1450–1465; it reads ESQEKVMNDSDTHENS. N-linked (GlcNAc...) asparagine glycosylation is present at asparagine 1457. Polar residues-rich tracts occupy residues 1466 to 1479 and 1487 to 1513; these read LMDQNNPISYSLSE and VTSVSSDSQTGMDRSPGKSPSANGLSQ. Residues serine 1549 and serine 1551 are each glycosylated (O-linked (Xyl...) (chondroitin sulfate) serine). Composition is skewed to polar residues over residues 1554-1572 and 1593-1606; these read GTSDSLNENETSTDFSFAD and FPQSPTSSVTSENS. N-linked (GlcNAc...) asparagine glycosylation occurs at asparagine 1562. The N-linked (GlcNAc...) asparagine glycan is linked to asparagine 1618. A helical transmembrane segment spans residues 1637 to 1662; that stretch reads AVIPLVIVSALTFICLVVLVGILIYW. At 1663 to 2315 the chain is on the cytoplasmic side; that stretch reads RKCFQTAHFY…NIAESLESLV (653 aa). A phosphothreonine mark is found at threonine 1684 and threonine 1687. 2 Tyrosine-protein phosphatase domains span residues 1717–1992 and 2023–2282; these read FTEE…LVEA and LEKQ…ILSL. Substrate contacts are provided by residues aspartate 1901, 1933–1939, and glutamine 1977; that span reads CSAGVGR. Cysteine 1933 acts as the Phosphocysteine intermediate in catalysis. Position 2055 is a phosphoserine (serine 2055).

It belongs to the protein-tyrosine phosphatase family. Receptor class 5 subfamily. In terms of assembly, the carbonic-anhydrase like domain interacts with CNTN1 (contactin). Interacts with PTN. Interaction with PTN promotes formation of homooligomers; oligomerization impairs phosphatase activity. Interacts (via chondroitin sulfate chains) with MDK (via C-terminal); this interaction is inhibited by PTN; this interaction promotes neuronal migration. In terms of tissue distribution, specifically expressed in the central nervous system, where it is localized in the Purkinje cell layer of the cerebellum, the dentate gyrus, and the subependymal layer of the anterior horn of the lateral ventricle. Developmentally regulated in the brain.

The protein localises to the cell membrane. It localises to the secreted. The enzyme catalyses O-phospho-L-tyrosyl-[protein] + H2O = L-tyrosyl-[protein] + phosphate. In terms of biological role, protein tyrosine phosphatase that negatively regulates oligodendrocyte precursor proliferation in the embryonic spinal cord. Required for normal differentiation of the precursor cells into mature, fully myelinating oligodendrocytes. May play a role in protecting oligondendrocytes against apoptosis. May play a role in the establishment of contextual memory, probably via the dephosphorylation of proteins that are part of important signaling cascades. This chain is Receptor-type tyrosine-protein phosphatase zeta (PTPRZ1), found in Homo sapiens (Human).